The sequence spans 411 residues: Tyrosine--tRNA ligase (411 aa).

Residue Y34 participates in L-tyrosine binding. The 'HIGH' region motif lies at 39–48; it reads CTATSLHIGS. L-tyrosine is bound by residues Y171 and Q175. The 'KMSKS' region signature appears at 231-235; sequence KMGKT. K234 is an ATP binding site. The region spanning 345-411 is the S4 RNA-binding domain; the sequence is ISAYELFHEA…GKKRHILVRV (67 aa).

Belongs to the class-I aminoacyl-tRNA synthetase family. TyrS type 1 subfamily. Homodimer.

The protein localises to the cytoplasm. It catalyses the reaction tRNA(Tyr) + L-tyrosine + ATP = L-tyrosyl-tRNA(Tyr) + AMP + diphosphate + H(+). Catalyzes the attachment of tyrosine to tRNA(Tyr) in a two-step reaction: tyrosine is first activated by ATP to form Tyr-AMP and then transferred to the acceptor end of tRNA(Tyr). The protein is Tyrosine--tRNA ligase of Rickettsia peacockii (strain Rustic).